The following is a 281-amino-acid chain: tRNA uridine(34) hydroxylase (281 aa).

One can recognise a Rhodanese domain in the interval 125–222 (AREDVKTIDT…YFLKTKNKDG (98 aa)). The Cysteine persulfide intermediate role is filled by C182.

It belongs to the TrhO family.

The enzyme catalyses uridine(34) in tRNA + AH2 + O2 = 5-hydroxyuridine(34) in tRNA + A + H2O. Functionally, catalyzes oxygen-dependent 5-hydroxyuridine (ho5U) modification at position 34 in tRNAs. This Neorickettsia sennetsu (strain ATCC VR-367 / Miyayama) (Ehrlichia sennetsu) protein is tRNA uridine(34) hydroxylase.